Consider the following 185-residue polypeptide: MNSDLKSFDKIEQKIGGSRKISNYIIGGMLTIGGIGFLLASISSYTGRDLLPLGNPSTLLFIPQGIIMGAYGVIANLLNFYLWYLVYINFGSGSNYFDKSSKSIEIRRKGLFKDIEVKLNFDEIKSVKLDISEGFNPRRRIALVLKGRKKPLPLSGAGELKPLLQVEEEGARLAKFLDVNLEGLK.

A run of 2 helical transmembrane segments spans residues 24–44 (YIIG…SISS) and 66–86 (IIMG…WYLV).

Belongs to the Ycf4 family.

It localises to the cellular thylakoid membrane. Seems to be required for the assembly of the photosystem I complex. This Prochlorococcus marinus (strain MIT 9301) protein is Photosystem I assembly protein Ycf4.